Here is a 726-residue protein sequence, read N- to C-terminus: Dipeptidyl-peptidase 5 (726 aa).

The N-terminal stretch at 1–19 (MAAAKWLIASLAFASSGLA) is a signal peptide. 2 N-linked (GlcNAc...) asparagine glycosylation sites follow: Asn-96 and Asn-252. Positions 269–291 (AEPINKRNGPRTPQAIEGASSSP) are disordered. Ser-558 acts as the Charge relay system in catalysis. N-linked (GlcNAc...) asparagine glycosylation is present at Asn-605. Active-site charge relay system residues include Asp-641 and His-673. Asn-699 carries N-linked (GlcNAc...) asparagine glycosylation.

The protein belongs to the peptidase S9C family.

It is found in the secreted. Extracellular dipeptidyl-peptidase which removes N-terminal dipeptides sequentially from polypeptides having unsubstituted N-termini. Contributes to pathogenicity. The chain is Dipeptidyl-peptidase 5 (DPP5) from Trichophyton equinum (Horse ringworm fungus).